Reading from the N-terminus, the 180-residue chain is Methionine-R-sulfoxide reductase B2, mitochondrial (180 aa).

Residues 1 to 41 (MSRFLVRLSTVVSKGATGKSVLPQKRIFAGIRLISSSTGLQ) constitute a mitochondrion transit peptide. The MsrB domain maps to 49–178 (STDWQRKLSP…NSVALNFKPR (130 aa)). Residues C88, C91, C144, and C147 each coordinate Zn(2+). The active-site Nucleophile is C167.

The protein belongs to the MsrB Met sulfoxide reductase family. The cofactor is Zn(2+).

Its subcellular location is the mitochondrion. It catalyses the reaction L-methionyl-[protein] + [thioredoxin]-disulfide + H2O = L-methionyl-(R)-S-oxide-[protein] + [thioredoxin]-dithiol. It carries out the reaction [thioredoxin]-disulfide + L-methionine + H2O = L-methionine (R)-S-oxide + [thioredoxin]-dithiol. Functionally, methionine-sulfoxide reductase that specifically reduces methionine (R)-sulfoxide back to methionine. While in many cases, methionine oxidation is the result of random oxidation following oxidative stress, methionine oxidation is also a post-translational modification that takes place on specific residue. Upon oxidative stress, may play a role in the preservation of mitochondrial integrity by decreasing the intracellular reactive oxygen species build-up through its scavenging role, hence contributing to cell survival and protein maintenance. In Danio rerio (Zebrafish), this protein is Methionine-R-sulfoxide reductase B2, mitochondrial (msrb2).